The following is a 398-amino-acid chain: Acetate kinase (398 aa).

Residue N9 coordinates Mg(2+). Position 16 (K16) interacts with ATP. Substrate is bound at residue R93. The active-site Proton donor/acceptor is D150. ATP contacts are provided by residues 209–213 (HLGAG), 284–286 (DMR), and 329–333 (GIGEH). E382 contributes to the Mg(2+) binding site.

It belongs to the acetokinase family. Homodimer. The cofactor is Mg(2+). Requires Mn(2+) as cofactor.

Its subcellular location is the cytoplasm. The enzyme catalyses acetate + ATP = acetyl phosphate + ADP. The protein operates within metabolic intermediate biosynthesis; acetyl-CoA biosynthesis; acetyl-CoA from acetate: step 1/2. Catalyzes the formation of acetyl phosphate from acetate and ATP. Can also catalyze the reverse reaction. The sequence is that of Acetate kinase from Rhodopseudomonas palustris (strain ATCC BAA-98 / CGA009).